The chain runs to 374 residues: MNVRERCRRLWEDPGPRKDRSPFALLLEVFSLFYRVGVVLRNDFYDRELFRSVRLPCRVISVGNVTAGGTGKTPMVILLARLLKDLGYRPAVLSRGYGGKGKAPVNIVSDGASILMSPLEGGDEPVLIARSVPGIPVLTGSDRCLTGRNAIERMGADVLILDDGFQHRRLFRDINIVLLDSDRPWGNGFLLPRGPLREPPTRALRRADIVIRTGGMHNRTSGEAAGTQVETGDSGAVLLRSSPIFRGIHQPCALISLDGGRKMDLQYLAGERICAFAGIGVPEQFRKTLESLGAEIVEFLAYPDHHRYDSSDLAFIERTAKEARAEMIVTTEKDEIKLAPMEKLALPACFLSIEMRVKPQKSFEHLVLEMMKDG.

Thr66–Thr73 is a binding site for ATP.

Belongs to the LpxK family.

It carries out the reaction a lipid A disaccharide + ATP = a lipid IVA + ADP + H(+). Its pathway is glycolipid biosynthesis; lipid IV(A) biosynthesis; lipid IV(A) from (3R)-3-hydroxytetradecanoyl-[acyl-carrier-protein] and UDP-N-acetyl-alpha-D-glucosamine: step 6/6. Functionally, transfers the gamma-phosphate of ATP to the 4'-position of a tetraacyldisaccharide 1-phosphate intermediate (termed DS-1-P) to form tetraacyldisaccharide 1,4'-bis-phosphate (lipid IVA). The polypeptide is Tetraacyldisaccharide 4'-kinase (Syntrophus aciditrophicus (strain SB)).